The sequence spans 297 residues: Phosphoribosylaminoimidazole-succinocarboxamide synthase (297 aa).

It belongs to the SAICAR synthetase family.

The enzyme catalyses 5-amino-1-(5-phospho-D-ribosyl)imidazole-4-carboxylate + L-aspartate + ATP = (2S)-2-[5-amino-1-(5-phospho-beta-D-ribosyl)imidazole-4-carboxamido]succinate + ADP + phosphate + 2 H(+). It participates in purine metabolism; IMP biosynthesis via de novo pathway; 5-amino-1-(5-phospho-D-ribosyl)imidazole-4-carboxamide from 5-amino-1-(5-phospho-D-ribosyl)imidazole-4-carboxylate: step 1/2. This Mycobacterium ulcerans (strain Agy99) protein is Phosphoribosylaminoimidazole-succinocarboxamide synthase.